The chain runs to 282 residues: Bifunctional protein FolD (282 aa).

NADP(+) is bound by residues 164–166 (GAS), isoleucine 189, and isoleucine 230.

This sequence belongs to the tetrahydrofolate dehydrogenase/cyclohydrolase family. In terms of assembly, homodimer.

The catalysed reaction is (6R)-5,10-methylene-5,6,7,8-tetrahydrofolate + NADP(+) = (6R)-5,10-methenyltetrahydrofolate + NADPH. The enzyme catalyses (6R)-5,10-methenyltetrahydrofolate + H2O = (6R)-10-formyltetrahydrofolate + H(+). It functions in the pathway one-carbon metabolism; tetrahydrofolate interconversion. Catalyzes the oxidation of 5,10-methylenetetrahydrofolate to 5,10-methenyltetrahydrofolate and then the hydrolysis of 5,10-methenyltetrahydrofolate to 10-formyltetrahydrofolate. The sequence is that of Bifunctional protein FolD from Campylobacter jejuni (strain RM1221).